Consider the following 536-residue polypeptide: MEKFGVHNPATELATVGLGGAASVRYNFSAAALYEEAIRRGEAELTAQGALRALTGQHTGRSPRDKFVVRDANTDGQIWWDNNKPLSPEHFALLRDDMLAHAAGKDLFAQDLVGGAEEGHALPTRVITELAWHSLFIRNLLIRPEAAALPTFVPKLTIIDLPSFKADPARHGCRSETVIACDLTNGLVLIGGTSYAGEMKKSVFTVLNYLLPAKGVMPMHCSANVGPDGDAAVFFGLSGTGKTTLSADPARTLIGDDEHGWSENGIFNFEGGCYAKTIRLSAEAEPEIYATTQRFGTVLENVVLNERREPDFDDGSLTENTRCAYPMHFIPNASETGRAGHPKTIIMLTADAFGVMPPIARLTPDQAMYHFLSGYTAKVAGTEKGVVEPEATFSTCFGAPFMPRHPAEYGNLLKELISRHGVECWLVNTGWTGGAYGTGKRMPIKATRGLLAAALSGKLGQLQFRTDTNFGFAVPVSVDGVDGSILDPRSTWADKAAYDAQAEKLVSMFIANFAKFEDHVDGGVRDAAPGVKAAAE.

Substrate is bound by residues R61, Y195, and K201. ATP contacts are provided by residues K201, H220, and 236–244; that span reads GLSGTGKTT. The Mn(2+) site is built by K201 and H220. A Mn(2+)-binding site is contributed by D257. 3 residues coordinate ATP: E285, R322, and T447. Residue R322 coordinates substrate.

This sequence belongs to the phosphoenolpyruvate carboxykinase (ATP) family. Requires Mn(2+) as cofactor.

It is found in the cytoplasm. It carries out the reaction oxaloacetate + ATP = phosphoenolpyruvate + ADP + CO2. It functions in the pathway carbohydrate biosynthesis; gluconeogenesis. Functionally, involved in the gluconeogenesis. Catalyzes the conversion of oxaloacetate (OAA) to phosphoenolpyruvate (PEP) through direct phosphoryl transfer between the nucleoside triphosphate and OAA. This chain is Phosphoenolpyruvate carboxykinase (ATP), found in Rhizobium etli (strain ATCC 51251 / DSM 11541 / JCM 21823 / NBRC 15573 / CFN 42).